The primary structure comprises 1071 residues: Tricorn protease (1071 aa).

The tract at residues 39–310 is six-bladed beta propeller; the sequence is MPNLLLNPDI…EKIEKIEIGD (272 aa). The interval 131–132 is binds the substrate's C-terminus; it reads RR. Positions 326–675 are seven-bladed beta propeller; the sequence is AEDFSPLDGD…EDERTVETDK (350 aa). Positions 679–745 are C-1; helical bundle; that stretch reads VSSIHEEFLQ…VEMQGEYRTS (67 aa). The active-site Charge relay system is the His746. Positions 761 to 855 are PDZ-like; sequence RSGRIACDFK…DLMIDILDDD (95 aa). The C-2; alpha-beta sandwich stretch occupies residues 856–1061; sequence RFIRYRSWVE…IDALIEELRN (206 aa). Position 916–918 (916–918) interacts with substrate; the sequence is GGG. Ser965 acts as the Nucleophile in catalysis. 993–995 is a substrate binding site; it reads GIT. The active-site Charge relay system is Glu1023.

The protein belongs to the peptidase S41B family. As to quaternary structure, part of the Tricorn proteolytic complex. Assembles to form a hexameric toroid, 20 copies of which may then assemble to form an icosahedral supermolecule of 14.6 MDa.

It localises to the cytoplasm. Its function is as follows. Tricorn degrades oligopeptides (probably derived from the proteasome) and channels the products to F1, F2 and F3 proteases, which then catalyze the terminal degradation step, yielding free amino acids. This is Tricorn protease (tri) from Thermoplasma acidophilum (strain ATCC 25905 / DSM 1728 / JCM 9062 / NBRC 15155 / AMRC-C165).